The sequence spans 199 residues: Heparin-binding hemagglutinin (199 aa).

Low complexity predominate over residues 162–180 (KAAPAKKAAPAKKAAPAKK). The disordered stretch occupies residues 162–199 (KAAPAKKAAPAKKAAPAKKAAAKKAPAKKAAAKKVTQK). The span at 181-199 (AAAKKAPAKKAAAKKVTQK) shows a compositional bias: basic residues.

It to M.leprae HbhA. In terms of processing, glycosylated. Glycosylation may protect the protein from proteolytic degradation and be important for hemagglutination. It suggests that the carbohydrate moiety may be located within the C-terminal domain of HbhA.

The protein resides in the cell surface. Its function is as follows. Required for extrapulmonary dissemination. Mediates adherence to epithelial cells by binding to sulfated glycoconjugates present at the surface of these cells. The protein is Heparin-binding hemagglutinin (hbhA) of Mycobacterium tuberculosis (strain CDC 1551 / Oshkosh).